The following is a 274-amino-acid chain: Penicillin-insensitive murein endopeptidase (274 aa).

The signal sequence occupies residues 1–19; sequence MKKTAIALLAWFVSSASLA. Disulfide bonds link C44/C265, C187/C235, and C216/C223. Zn(2+) is bound by residues H110, H113, D120, D147, H150, and H211. Residues 225 to 274 form a disordered region; it reads DQPLPPPGDGCGAELQSWFEPPKPGTTKPEKKTPPPLPPSCQALLDEHVL.

The protein belongs to the peptidase M74 family. Dimer. Zn(2+) is required as a cofactor.

Its subcellular location is the periplasm. Its function is as follows. Murein endopeptidase that cleaves the D-alanyl-meso-2,6-diamino-pimelyl amide bond that connects peptidoglycan strands. Likely plays a role in the removal of murein from the sacculus. The chain is Penicillin-insensitive murein endopeptidase from Salmonella choleraesuis (strain SC-B67).